The following is a 225-amino-acid chain: Uracil-DNA glycosylase (225 aa).

The active-site Proton acceptor is the aspartate 68.

Belongs to the uracil-DNA glycosylase (UDG) superfamily. UNG family.

It is found in the cytoplasm. It carries out the reaction Hydrolyzes single-stranded DNA or mismatched double-stranded DNA and polynucleotides, releasing free uracil.. In terms of biological role, excises uracil residues from the DNA which can arise as a result of misincorporation of dUMP residues by DNA polymerase or due to deamination of cytosine. This is Uracil-DNA glycosylase from Mycolicibacterium gilvum (strain PYR-GCK) (Mycobacterium gilvum (strain PYR-GCK)).